Consider the following 439-residue polypeptide: Xylose isomerase (439 aa).

Catalysis depends on residues H101 and D104. Mg(2+) is bound by residues E232, E268, H271, D296, D307, D309, and D339.

This sequence belongs to the xylose isomerase family. In terms of assembly, homotetramer. Mg(2+) serves as cofactor.

The protein resides in the cytoplasm. The catalysed reaction is alpha-D-xylose = alpha-D-xylulofuranose. The chain is Xylose isomerase from Pseudoalteromonas atlantica (strain T6c / ATCC BAA-1087).